Consider the following 274-residue polypeptide: Large ribosomal subunit protein uL2 (274 aa).

Residues 222-257 form a disordered region; the sequence is GVAMNPVDHPHGGGEGRTSGGRHPVSPWGVPTKGYK.

It belongs to the universal ribosomal protein uL2 family. Part of the 50S ribosomal subunit. Forms a bridge to the 30S subunit in the 70S ribosome.

In terms of biological role, one of the primary rRNA binding proteins. Required for association of the 30S and 50S subunits to form the 70S ribosome, for tRNA binding and peptide bond formation. It has been suggested to have peptidyltransferase activity; this is somewhat controversial. Makes several contacts with the 16S rRNA in the 70S ribosome. The polypeptide is Large ribosomal subunit protein uL2 (Nitrosococcus oceani (strain ATCC 19707 / BCRC 17464 / JCM 30415 / NCIMB 11848 / C-107)).